The chain runs to 438 residues: Aspartate--tRNA(Asp/Asn) ligase (438 aa).

L-aspartate is bound at residue Glu176. Positions 198–201 (QLYK) are aspartate. An L-aspartate-binding site is contributed by Arg220. ATP contacts are provided by residues 220–222 (RAE), 228–230 (RHL), and Glu361. The Mg(2+) site is built by Glu361 and Ser364. Residues Ser364 and Arg368 each coordinate L-aspartate. An ATP-binding site is contributed by 409–412 (GADR).

The protein belongs to the class-II aminoacyl-tRNA synthetase family. Type 2 subfamily. In terms of assembly, homodimer. It depends on Mg(2+) as a cofactor.

The protein resides in the cytoplasm. The enzyme catalyses tRNA(Asx) + L-aspartate + ATP = L-aspartyl-tRNA(Asx) + AMP + diphosphate. Functionally, aspartyl-tRNA synthetase with relaxed tRNA specificity since it is able to aspartylate not only its cognate tRNA(Asp) but also tRNA(Asn). Reaction proceeds in two steps: L-aspartate is first activated by ATP to form Asp-AMP and then transferred to the acceptor end of tRNA(Asp/Asn). The sequence is that of Aspartate--tRNA(Asp/Asn) ligase from Methanococcus maripaludis (strain C7 / ATCC BAA-1331).